The chain runs to 390 residues: Guanine nucleotide-binding protein alpha-7 subunit (390 aa).

Composition is skewed to low complexity over residues 1–12 and 22–42; these read MSSTTTNTTTAT and SSSPQSPSSSTSTLSPPMSPS. Residues 1 to 42 form a disordered region; the sequence is MSSTTTNTTTATPAIQVNGNQSSSPQSPSSSTSTLSPPMSPS. One can recognise a G-alpha domain in the interval 70–390; it reads SELKLLLLGT…TRQTMEEGGI (321 aa). A G1 motif region spans residues 73–86; it reads KLLLLGTGDSGKST. Residues 78–85, 213–219, 238–242, 307–310, and alanine 363 each bind GTP; these read GTGDSGKS, LYTRVAS, DVAGQ, and NKRD. Serine 85 serves as a coordination point for Mg(2+). A G2 motif region spans residues 211–219; the sequence is DILYTRVAS. Positions 234–243 are G3 motif; it reads FRMIDVAGQR. A G4 motif region spans residues 303 to 310; that stretch reads ILFLNKRD. The G5 motif stretch occupies residues 361-366; it reads TTATDT.

It belongs to the G-alpha family. G proteins are composed of 3 units; alpha, beta and gamma. The alpha chain contains the guanine nucleotide binding site.

In terms of biological role, guanine nucleotide-binding proteins (G proteins) are involved as modulators or transducers in various transmembrane signaling systems. This is Guanine nucleotide-binding protein alpha-7 subunit (gpaG) from Dictyostelium discoideum (Social amoeba).